The sequence spans 208 residues: FMN-dependent NADH:quinone oxidoreductase (208 aa).

FMN is bound by residues 17 to 19, 99 to 102, and 143 to 146; these read SNS, MWNL, and SRGG.

Belongs to the azoreductase type 1 family. As to quaternary structure, homodimer. The cofactor is FMN.

The enzyme catalyses 2 a quinone + NADH + H(+) = 2 a 1,4-benzosemiquinone + NAD(+). It carries out the reaction N,N-dimethyl-1,4-phenylenediamine + anthranilate + 2 NAD(+) = 2-(4-dimethylaminophenyl)diazenylbenzoate + 2 NADH + 2 H(+). Its function is as follows. Quinone reductase that provides resistance to thiol-specific stress caused by electrophilic quinones. Also exhibits azoreductase activity. Catalyzes the reductive cleavage of the azo bond in aromatic azo compounds to the corresponding amines. The chain is FMN-dependent NADH:quinone oxidoreductase from Staphylococcus aureus (strain MRSA252).